Consider the following 843-residue polypeptide: Junction-mediating and -regulatory protein (843 aa).

The tract at residues 49 to 91 (RTAQRQRSADKAGGRSPARQQQRDSPAQSPARKAREEPEEGEE) is disordered. A compositionally biased stretch (polar residues) spans 66 to 76 (ARQQQRDSPAQ). 3 coiled-coil regions span residues 190–225 (SELRHKGYEEGLQRARKRLQELLEKHKTTEVMVDLL), 359–385 (RAKEICLEQKKHALKDQMQSLQGGTEA), and 416–487 (LLLT…AKKA). Disordered regions lie at residues 518–537 (QLKQEKQEDEEERKSTWVSQ), 558–632 (VLKS…ITSE), and 652–688 (STLQPSSLPASPPPPPPPLPPPPPPPLPPSKQDTDTL). Basic residues predominate over residues 562–574 (TRLRFSHERRRST). Composition is skewed to polar residues over residues 582–596 (DAPQSLSVSIQTQGL) and 613–630 (PETTTQLEDSSLPPNAIT). Pro residues predominate over residues 661-680 (ASPPPPPPPLPPPPPPPLPP). One can recognise a WH2 domain in the interval 776–793 (ESNNILAQIRKGVKLKKV). Residues 821-843 (RIKEASPESEDEEESLPCTDWEN) are disordered. A compositionally biased stretch (acidic residues) spans 827–843 (PESEDEEESLPCTDWEN).

The protein belongs to the JMY family.

The protein resides in the nucleus. It localises to the cytoplasmic vesicle. Its subcellular location is the cytoplasm. The protein localises to the cytoskeleton. It is found in the endomembrane system. The protein resides in the autophagosome membrane. Acts both as a nuclear p53/TP53-cofactor and a cytoplasmic regulator of actin dynamics depending on conditions. In nucleus, acts as a cofactor that increases p53/TP53 response. Increases p53/TP53-dependent transcription and apoptosis, suggesting an important role in p53/TP53 stress response such as DNA damage. In cytoplasm, acts as a nucleation-promoting factor for both branched and unbranched actin filaments. Activates the Arp2/3 complex to induce branched actin filament networks. Also catalyzes actin polymerization in the absence of Arp2/3, creating unbranched filaments. Contributes to cell motility by controlling actin dynamics. In Xenopus tropicalis (Western clawed frog), this protein is Junction-mediating and -regulatory protein (jmy).